Here is a 482-residue protein sequence, read N- to C-terminus: Membrane-bound lytic murein transglycosylase F (482 aa).

An N-terminal signal peptide occupies residues 1–18 (MKGLFLRIITALALLFWA). The interval 19 to 267 (IDMVFPWQFL…NLKEKYLGHI (249 aa)) is non-LT domain. The tract at residues 268-482 (SQFDYVDTRS…NLEEIKENED (215 aa)) is LT domain. Residue Glu312 is part of the active site. The span at 457-470 (ENQTTNDNANNESA) shows a compositional bias: polar residues. The tract at residues 457–482 (ENQTTNDNANNESAVKNLEEIKENED) is disordered. The segment covering 473 to 482 (NLEEIKENED) has biased composition (basic and acidic residues).

The protein in the N-terminal section; belongs to the bacterial solute-binding protein 3 family. It in the C-terminal section; belongs to the transglycosylase Slt family.

Its subcellular location is the cell outer membrane. It carries out the reaction Exolytic cleavage of the (1-&gt;4)-beta-glycosidic linkage between N-acetylmuramic acid (MurNAc) and N-acetylglucosamine (GlcNAc) residues in peptidoglycan, from either the reducing or the non-reducing ends of the peptidoglycan chains, with concomitant formation of a 1,6-anhydrobond in the MurNAc residue.. Its function is as follows. Murein-degrading enzyme that degrades murein glycan strands and insoluble, high-molecular weight murein sacculi, with the concomitant formation of a 1,6-anhydromuramoyl product. Lytic transglycosylases (LTs) play an integral role in the metabolism of the peptidoglycan (PG) sacculus. Their lytic action creates space within the PG sacculus to allow for its expansion as well as for the insertion of various structures such as secretion systems and flagella. The sequence is that of Membrane-bound lytic murein transglycosylase F from Haemophilus influenzae (strain PittGG).